The chain runs to 237 residues: 4'-phosphopantetheinyl transferase HetI (237 aa).

Mg(2+)-binding residues include aspartate 128, glutamate 130, and glutamate 174.

Belongs to the P-Pant transferase superfamily. Gsp/Sfp/HetI/AcpT family. The cofactor is Mg(2+).

The enzyme catalyses apo-[peptidyl-carrier protein] + CoA = holo-[peptidyl-carrier protein] + adenosine 3',5'-bisphosphate + H(+). In terms of biological role, probably activates the acyl carrier protein (ACP) domain of HetM, by transferring the 4'-phosphopantetheinyl moiety of coenzyme A (CoA) to a serine residue. May be required for maintaining vegetative growth and probably acts via HetN to inhibit differentiation. The protein is 4'-phosphopantetheinyl transferase HetI (hetI) of Nostoc sp. (strain PCC 7120 / SAG 25.82 / UTEX 2576).